A 277-amino-acid polypeptide reads, in one-letter code: Undecaprenyl-diphosphatase (277 aa).

6 consecutive transmembrane segments (helical) span residues 47-67, 85-105, 108-128, 187-207, 218-238, and 249-269; these read FNII…RGKI, ANLL…ADLI, WLFN…VMLW, FSFF…GYVY, VFAV…RALL, and FAWY…FHLI.

It belongs to the UppP family.

Its subcellular location is the cell inner membrane. The enzyme catalyses di-trans,octa-cis-undecaprenyl diphosphate + H2O = di-trans,octa-cis-undecaprenyl phosphate + phosphate + H(+). Its function is as follows. Catalyzes the dephosphorylation of undecaprenyl diphosphate (UPP). Confers resistance to bacitracin. The polypeptide is Undecaprenyl-diphosphatase (Pseudomonas aeruginosa (strain ATCC 15692 / DSM 22644 / CIP 104116 / JCM 14847 / LMG 12228 / 1C / PRS 101 / PAO1)).